A 285-amino-acid chain; its full sequence is Probable nudix hydrolase C6G9.05 (285 aa).

In terms of domain architecture, Nudix hydrolase spans 114–254; it reads TRFASVLMPL…DLLYVEFNID (141 aa). The Nudix box motif lies at 153-175; that stretch reads GRVEPSDGSHYYAALRETYEEIG. Glu169 and Glu173 together coordinate Mg(2+).

It belongs to the Nudix hydrolase family. PCD1 subfamily. Mn(2+) is required as a cofactor. It depends on Mg(2+) as a cofactor.

In terms of biological role, probably mediates the hydrolysis of some nucleoside diphosphate derivatives. In Schizosaccharomyces pombe (strain 972 / ATCC 24843) (Fission yeast), this protein is Probable nudix hydrolase C6G9.05.